A 145-amino-acid chain; its full sequence is Altered inheritance of mitochondria protein 11 (145 aa).

The next 2 helical transmembrane spans lie at 26 to 48 (MLRF…RGML) and 76 to 98 (LVLG…CWIA).

The protein belongs to the AIM11 family.

Its subcellular location is the membrane. This is Altered inheritance of mitochondria protein 11 (AIM11) from Zygosaccharomyces rouxii (strain ATCC 2623 / CBS 732 / NBRC 1130 / NCYC 568 / NRRL Y-229).